The chain runs to 446 residues: Exodeoxyribonuclease 7 large subunit (446 aa).

Belongs to the XseA family. Heterooligomer composed of large and small subunits.

Its subcellular location is the cytoplasm. It carries out the reaction Exonucleolytic cleavage in either 5'- to 3'- or 3'- to 5'-direction to yield nucleoside 5'-phosphates.. In terms of biological role, bidirectionally degrades single-stranded DNA into large acid-insoluble oligonucleotides, which are then degraded further into small acid-soluble oligonucleotides. The chain is Exodeoxyribonuclease 7 large subunit from Streptococcus pneumoniae (strain ATCC 700669 / Spain 23F-1).